Here is a 684-residue protein sequence, read N- to C-terminus: UvrABC system protein C (684 aa).

Residues 16 to 95 (TDPGVYKFRD…IKRFDPRFNV (80 aa)) enclose the GIY-YIG domain. The 36-residue stretch at 208–243 (APVRKRVTQRMEEAAENLEFELAARLRDDLGAIDKL) folds into the UVR domain. Residues 332 to 352 (EAAEDAKLERRGVDQESHAEP) show a composition bias toward basic and acidic residues. The disordered stretch occupies residues 332 to 357 (EAAEDAKLERRGVDQESHAEPRQGNA).

The protein belongs to the UvrC family. In terms of assembly, interacts with UvrB in an incision complex.

Its subcellular location is the cytoplasm. Its function is as follows. The UvrABC repair system catalyzes the recognition and processing of DNA lesions. UvrC both incises the 5' and 3' sides of the lesion. The N-terminal half is responsible for the 3' incision and the C-terminal half is responsible for the 5' incision. This Corynebacterium aurimucosum (strain ATCC 700975 / DSM 44827 / CIP 107346 / CN-1) (Corynebacterium nigricans) protein is UvrABC system protein C.